Consider the following 923-residue polypeptide: Protocadherin gamma-B4 (923 aa).

Positions 1-30 are cleaved as a signal peptide; that stretch reads MGSGAGELGRAERLPVLFLFLLSLFCPALC. 6 Cadherin domains span residues 31-133, 134-242, 243-345, 346-450, 451-560, and 568-673; these read EQIR…TPKF, TQNS…APVF, SQDV…APEV, IFQS…APVF, SQSS…APRV, and DGSA…LPDI. The Extracellular segment spans residues 31-689; that stretch reads EQIRYRIPEE…SDLQAELQFY (659 aa). Asparagine 417 and asparagine 543 each carry an N-linked (GlcNAc...) asparagine glycan. The chain crosses the membrane as a helical span at residues 690–710; it reads LVVALALISVLFLVAMILAIA. Residues 711 to 923 are Cytoplasmic-facing; sequence LRLRRSSSPA…KKKSGKKEKK (213 aa). Disordered stretches follow at residues 797–832 and 893–923; these read SHQQ…WPNN and ATLT…KEKK. The span at 913–923 shows a compositional bias: basic residues; the sequence is NKKKSGKKEKK.

Its subcellular location is the cell membrane. Its function is as follows. Potential calcium-dependent cell-adhesion protein. May be involved in the establishment and maintenance of specific neuronal connections in the brain. The chain is Protocadherin gamma-B4 (PCDHGB4) from Homo sapiens (Human).